We begin with the raw amino-acid sequence, 303 residues long: Ribosomal RNA small subunit methyltransferase H (303 aa).

S-adenosyl-L-methionine is bound by residues 36-38, Asp55, Phe81, Asp101, and Gln108; that span reads CGH.

This sequence belongs to the methyltransferase superfamily. RsmH family.

It is found in the cytoplasm. The catalysed reaction is cytidine(1402) in 16S rRNA + S-adenosyl-L-methionine = N(4)-methylcytidine(1402) in 16S rRNA + S-adenosyl-L-homocysteine + H(+). Its function is as follows. Specifically methylates the N4 position of cytidine in position 1402 (C1402) of 16S rRNA. In Aster yellows witches'-broom phytoplasma (strain AYWB), this protein is Ribosomal RNA small subunit methyltransferase H.